The sequence spans 251 residues: Phosphate import ATP-binding protein PstB (251 aa).

The region spanning 5 to 246 (IKIRGVNFFY…PRDKRTEDYI (242 aa)) is the ABC transporter domain. 37–44 (GPSGCGKS) is an ATP binding site.

Belongs to the ABC transporter superfamily. Phosphate importer (TC 3.A.1.7) family. As to quaternary structure, the complex is composed of two ATP-binding proteins (PstB), two transmembrane proteins (PstC and PstA) and a solute-binding protein (PstS).

The protein resides in the cell membrane. The catalysed reaction is phosphate(out) + ATP + H2O = ADP + 2 phosphate(in) + H(+). Its function is as follows. Part of the ABC transporter complex PstSACB involved in phosphate import. Responsible for energy coupling to the transport system. This is Phosphate import ATP-binding protein PstB from Dehalococcoides mccartyi (strain CBDB1).